We begin with the raw amino-acid sequence, 38 residues long: Large ribosomal subunit protein bL36A (38 aa).

This sequence belongs to the bacterial ribosomal protein bL36 family.

The sequence is that of Large ribosomal subunit protein bL36A from Pseudomonas aeruginosa (strain UCBPP-PA14).